Here is a 501-residue protein sequence, read N- to C-terminus: L-ornithine N(5)-monooxygenase (501 aa).

Residues 1–16 (MNGTSTTGNGFTNGTN) are compositionally biased toward low complexity. Residues 1 to 40 (MNGTSTTGNGFTNGTNYPVPKLELQPETTSTSPTRAQTHP) are disordered. The span at 26–37 (PETTSTSPTRAQ) shows a compositional bias: polar residues. FAD-binding positions include 92-100 (EKQSNFAWH) and Gln111. Residue Lys116 participates in substrate binding. Residue Val177 participates in FAD binding. An NADP(+)-binding site is contributed by 263-266 (SGQS). Substrate-binding positions include 304 to 307 (NELF) and Asn334. 334 to 336 (NYS) lines the NADP(+) pocket. 476–478 (SLL) serves as a coordination point for FAD. Ser479 contacts substrate.

Belongs to the lysine N(6)-hydroxylase/L-ornithine N(5)-oxygenase family. In terms of assembly, homotetramer. FAD is required as a cofactor.

The enzyme catalyses L-ornithine + NADPH + O2 = N(5)-hydroxy-L-ornithine + NADP(+) + H2O. It catalyses the reaction L-ornithine + NADH + O2 = N(5)-hydroxy-L-ornithine + NAD(+) + H2O. The protein operates within siderophore biosynthesis. Its function is as follows. L-ornithine N(5)-monooxygenase; part of the siderophore biosynthetic pathway. Arthroderma benhamiae produces 2 types of extracellular siderophores, ferrichrome C and ferricrocin. The biosynthesis of these siderophores depends on the hydroxylation of ornithine to N(5)-hydroxyornithine, catalyzed by the monooxygenase sidA. The structure of ferricrocin differs from ferrichrome C only by a serine for alanine substitution and the assembly of both siderophores is suggested to be performed by the nonribosomal peptide synthase (NRPS) sidC. The chain is L-ornithine N(5)-monooxygenase from Arthroderma benhamiae (strain ATCC MYA-4681 / CBS 112371) (Trichophyton mentagrophytes).